The following is a 431-amino-acid chain: Tyrosine--tRNA ligase (431 aa).

Residue Tyr34 participates in L-tyrosine binding. The 'HIGH' region signature appears at 39–48 (PTADSLHIGH). L-tyrosine-binding residues include Tyr171 and Gln175. Residues 231 to 235 (KFGKT) carry the 'KMSKS' region motif. ATP is bound at residue Lys234. The region spanning 353 to 422 (INVVEALVKT…GKYTILRRGK (70 aa)) is the S4 RNA-binding domain.

This sequence belongs to the class-I aminoacyl-tRNA synthetase family. TyrS type 1 subfamily. In terms of assembly, homodimer.

Its subcellular location is the cytoplasm. It catalyses the reaction tRNA(Tyr) + L-tyrosine + ATP = L-tyrosyl-tRNA(Tyr) + AMP + diphosphate + H(+). In terms of biological role, catalyzes the attachment of tyrosine to tRNA(Tyr) in a two-step reaction: tyrosine is first activated by ATP to form Tyr-AMP and then transferred to the acceptor end of tRNA(Tyr). The polypeptide is Tyrosine--tRNA ligase (Neisseria meningitidis serogroup C / serotype 2a (strain ATCC 700532 / DSM 15464 / FAM18)).